We begin with the raw amino-acid sequence, 78 residues long: Small venom protein 2 (78 aa).

The N-terminal stretch at Met1–Ala19 is a signal peptide. A propeptide spanning residues Asp20–Arg42 is cleaved from the precursor.

In terms of tissue distribution, expressed by the venom gland.

The protein resides in the secreted. In Pimpla hypochondriaca (Parasitoid wasp), this protein is Small venom protein 2.